We begin with the raw amino-acid sequence, 472 residues long: 3-isopropylmalate dehydratase large subunit (472 aa).

Cysteine 353, cysteine 414, and cysteine 417 together coordinate [4Fe-4S] cluster.

Belongs to the aconitase/IPM isomerase family. LeuC type 1 subfamily. Heterodimer of LeuC and LeuD. [4Fe-4S] cluster is required as a cofactor.

The enzyme catalyses (2R,3S)-3-isopropylmalate = (2S)-2-isopropylmalate. It functions in the pathway amino-acid biosynthesis; L-leucine biosynthesis; L-leucine from 3-methyl-2-oxobutanoate: step 2/4. Its function is as follows. Catalyzes the isomerization between 2-isopropylmalate and 3-isopropylmalate, via the formation of 2-isopropylmaleate. This chain is 3-isopropylmalate dehydratase large subunit, found in Acinetobacter baumannii (strain AB0057).